Reading from the N-terminus, the 282-residue chain is Sulfur carrier protein FdhD (282 aa).

The active-site Cysteine persulfide intermediate is Cys126. Residue Phe265 to Arg270 coordinates Mo-bis(molybdopterin guanine dinucleotide).

Belongs to the FdhD family.

Its subcellular location is the cytoplasm. Its function is as follows. Required for formate dehydrogenase (FDH) activity. Acts as a sulfur carrier protein that transfers sulfur from IscS to the molybdenum cofactor prior to its insertion into FDH. The sequence is that of Sulfur carrier protein FdhD from Thermoplasma acidophilum (strain ATCC 25905 / DSM 1728 / JCM 9062 / NBRC 15155 / AMRC-C165).